The following is a 698-amino-acid chain: UvrABC system protein B (698 aa).

The region spanning 35–210 (ARLQAGEKDI…TFRVRGDTVE (176 aa)) is the Helicase ATP-binding domain. 48-55 (GATGTGKS) is a binding site for ATP. The Beta-hairpin signature appears at 101 to 124 (YYDYYQPEAYVPSSDTYIEKDSSI). The Helicase C-terminal domain maps to 438–604 (QIDDLLAEIN…PLRKRIGDIT (167 aa)). Positions 654-689 (AELIQELTDQMHVAAGELQFEVAARLRDEISDLKKE) constitute a UVR domain.

The protein belongs to the UvrB family. In terms of assembly, forms a heterotetramer with UvrA during the search for lesions. Interacts with UvrC in an incision complex.

The protein resides in the cytoplasm. Its function is as follows. The UvrABC repair system catalyzes the recognition and processing of DNA lesions. A damage recognition complex composed of 2 UvrA and 2 UvrB subunits scans DNA for abnormalities. Upon binding of the UvrA(2)B(2) complex to a putative damaged site, the DNA wraps around one UvrB monomer. DNA wrap is dependent on ATP binding by UvrB and probably causes local melting of the DNA helix, facilitating insertion of UvrB beta-hairpin between the DNA strands. Then UvrB probes one DNA strand for the presence of a lesion. If a lesion is found the UvrA subunits dissociate and the UvrB-DNA preincision complex is formed. This complex is subsequently bound by UvrC and the second UvrB is released. If no lesion is found, the DNA wraps around the other UvrB subunit that will check the other stand for damage. This is UvrABC system protein B from Beutenbergia cavernae (strain ATCC BAA-8 / DSM 12333 / CCUG 43141 / JCM 11478 / NBRC 16432 / NCIMB 13614 / HKI 0122).